A 257-amino-acid chain; its full sequence is NH(3)-dependent NAD(+) synthetase (257 aa).

Position 28 to 35 (28 to 35 (GISGGVDS)) interacts with ATP. Asp-34 serves as a coordination point for Mg(2+). Arg-109 lines the deamido-NAD(+) pocket. Thr-129 contributes to the ATP binding site. Glu-134 is a binding site for Mg(2+). The deamido-NAD(+) site is built by Lys-142 and Asp-149. Positions 158 and 180 each coordinate ATP. Residue 240 to 241 (HK) coordinates deamido-NAD(+).

It belongs to the NAD synthetase family. As to quaternary structure, homodimer.

It catalyses the reaction deamido-NAD(+) + NH4(+) + ATP = AMP + diphosphate + NAD(+) + H(+). The protein operates within cofactor biosynthesis; NAD(+) biosynthesis; NAD(+) from deamido-NAD(+) (ammonia route): step 1/1. Its function is as follows. Catalyzes the ATP-dependent amidation of deamido-NAD to form NAD. Uses ammonia as a nitrogen source. This Pyrococcus horikoshii (strain ATCC 700860 / DSM 12428 / JCM 9974 / NBRC 100139 / OT-3) protein is NH(3)-dependent NAD(+) synthetase.